Consider the following 321-residue polypeptide: Porphobilinogen deaminase (321 aa).

Cysteine 243 is modified (S-(dipyrrolylmethanemethyl)cysteine).

Belongs to the HMBS family. In terms of assembly, monomer. Requires dipyrromethane as cofactor.

The enzyme catalyses 4 porphobilinogen + H2O = hydroxymethylbilane + 4 NH4(+). It functions in the pathway porphyrin-containing compound metabolism; protoporphyrin-IX biosynthesis; coproporphyrinogen-III from 5-aminolevulinate: step 2/4. Its function is as follows. Tetrapolymerization of the monopyrrole PBG into the hydroxymethylbilane pre-uroporphyrinogen in several discrete steps. This chain is Porphobilinogen deaminase, found in Histophilus somni (strain 129Pt) (Haemophilus somnus).